The primary structure comprises 206 residues: GTP cyclohydrolase 1 (206 aa).

Zn(2+) is bound by residues Cys98, His101, and Cys169.

The protein belongs to the GTP cyclohydrolase I family. Toroid-shaped homodecamer, composed of two pentamers of five dimers.

It carries out the reaction GTP + H2O = 7,8-dihydroneopterin 3'-triphosphate + formate + H(+). It functions in the pathway cofactor biosynthesis; 7,8-dihydroneopterin triphosphate biosynthesis; 7,8-dihydroneopterin triphosphate from GTP: step 1/1. The polypeptide is GTP cyclohydrolase 1 (Helicobacter hepaticus (strain ATCC 51449 / 3B1)).